We begin with the raw amino-acid sequence, 382 residues long: S-adenosylmethionine synthase (382 aa).

An ATP-binding site is contributed by histidine 16. Mg(2+) is bound at residue aspartate 18. Glutamate 44 contacts K(+). 2 residues coordinate L-methionine: glutamate 57 and glutamine 100. The flexible loop stretch occupies residues 100-110 (QSPDIAQGVDN). Residues 165–167 (DAK), 231–232 (RF), aspartate 240, 246–247 (RK), and lysine 267 each bind ATP. Position 240 (aspartate 240) interacts with L-methionine. L-methionine is bound at residue lysine 271.

Belongs to the AdoMet synthase family. Homotetramer; dimer of dimers. It depends on Mg(2+) as a cofactor. The cofactor is K(+).

It localises to the cytoplasm. The catalysed reaction is L-methionine + ATP + H2O = S-adenosyl-L-methionine + phosphate + diphosphate. The protein operates within amino-acid biosynthesis; S-adenosyl-L-methionine biosynthesis; S-adenosyl-L-methionine from L-methionine: step 1/1. Its function is as follows. Catalyzes the formation of S-adenosylmethionine (AdoMet) from methionine and ATP. The overall synthetic reaction is composed of two sequential steps, AdoMet formation and the subsequent tripolyphosphate hydrolysis which occurs prior to release of AdoMet from the enzyme. This Legionella pneumophila subsp. pneumophila (strain Philadelphia 1 / ATCC 33152 / DSM 7513) protein is S-adenosylmethionine synthase.